Here is a 135-residue protein sequence, read N- to C-terminus: Small ribosomal subunit protein uS11 (135 aa).

Over residues 1-10 (MPPKSRTATA) the composition is skewed to polar residues. Disordered regions lie at residues 1–27 (MPPK…HGHA) and 114–135 (GAIQ…RRRV). A compositionally biased stretch (basic residues) spans 12 to 27 (RKPRRKEKKNVAHGHA).

Belongs to the universal ribosomal protein uS11 family. As to quaternary structure, part of the 30S ribosomal subunit. Interacts with proteins S7 and S18. Binds to IF-3.

Functionally, located on the platform of the 30S subunit, it bridges several disparate RNA helices of the 16S rRNA. Forms part of the Shine-Dalgarno cleft in the 70S ribosome. The sequence is that of Small ribosomal subunit protein uS11 from Kineococcus radiotolerans (strain ATCC BAA-149 / DSM 14245 / SRS30216).